The chain runs to 607 residues: Synaptotagmin-like protein 3 (607 aa).

The RabBD domain occupies 4–123 (EVDLESFKEL…IKTGEWFFEE (120 aa)). Residues 221–279 (VGHTERRSQSDTAVNVTSRKASTPDILKAFHQEDPKHPPDPVLKQDTPPSSPTHSAVFS) form a disordered region. Residues 230–241 (SDTAVNVTSRKA) are compositionally biased toward polar residues. Positions 248–259 (KAFHQEDPKHPP) are enriched in basic and acidic residues. 2 C2 domains span residues 305-430 (VTGE…ARWY) and 458-590 (LPAG…LQWH).

Monomer. Binds NRXN1. Binds RAB27A that has been activated by GTP-binding via its N-terminus. Highly expressed in spleen and lung. Detected at lower levels in heart and testis.

The protein localises to the endomembrane system. May act as Rab effector protein and play a role in vesicle trafficking. Binds phospholipids in the presence of calcium ions. The polypeptide is Synaptotagmin-like protein 3 (Sytl3) (Mus musculus (Mouse)).